The chain runs to 960 residues: Angiomotin-like protein 1 (960 aa).

The tract at residues 196–248 (SQFFRGQQPPPPPPQQQPGAVGHSYYMAGGASQKARTEGRPTVSRANSGQAHK) is disordered. Phosphoserine is present on residues Ser243, Ser271, and Ser297. A coiled-coil region spans residues 261-281 (RSLSERIMQLSLERNGAKQHL). Disordered stretches follow at residues 277 to 317 (AKQH…EYPF), 381 to 407 (LPFP…LHSV), and 413 to 432 (PPMA…SQQL). Positions 388–401 (QQHSPVSSQNSSVS) are enriched in low complexity. 2 coiled-coil regions span residues 440–641 (VERA…WLER) and 667–697 (ALME…VEES). Ser722 bears the Phosphoserine mark. Residues 731 to 761 (SLEAHIWQEEEEVVQATRRCQDMEYTIKNLH) are a coiled coil. The segment at 775–826 (QQRSRKDAGKTDSSSLRPARSVPSIAAATGTHSRQTSLTSSQLAEERKEEKT) is disordered. Phosphoserine is present on residues Ser795, Ser807, and Ser830. Over residues 804–817 (GTHSRQTSLTSSQL) the composition is skewed to polar residues. A disordered region spans residues 842–952 (NDHASTPLLP…NLLHKPEFPD (111 aa)). Residues 845–870 (ASTPLLPTPSAATLSPPTPGTSASSA) are compositionally biased toward low complexity. Residues 898–911 (PTRSRLSGTPSNSP) are compositionally biased toward polar residues. Ser904 carries the post-translational modification Phosphoserine. Thr906 is subject to Phosphothreonine. The residue at position 910 (Ser910) is a Phosphoserine. A PDZ-binding motif is present at residues 957-960 (EVLI).

The protein belongs to the angiomotin family. In terms of processing, polyubiquitinated by NEDD4, leading to proteasomal degradation.

The protein localises to the cell junction. The protein resides in the tight junction. Inhibits the Wnt/beta-catenin signaling pathway, probably by recruiting CTNNB1 to recycling endosomes and hence preventing its translocation to the nucleus. This Bos taurus (Bovine) protein is Angiomotin-like protein 1 (AMOTL1).